The primary structure comprises 668 residues: E3 ubiquitin-protein ligase RNF139 (668 aa).

At Ala2 the chain carries N-acetylalanine. 11 helical membrane passes run 51–71 (IGLQIFLRLLGIVVSSIVLIL), 85–105 (AFLLAATSVLVNYYAALHIDF), 125–145 (SLWMALIVLQLTFGIGYVTLL), 154–174 (LMILNILVPIIGLITELPLHI), 178–198 (VVLMSSLILIFNTVLVLAVKL), 293–313 (GMSAVISSIAHYLGLGILAFI), 323–343 (LGFVAPVLFFILALQTGLSGL), 356–376 (MCLLLTAVLHFIHGMTDPVLM), 390–410 (FPVLFVSACLFILPVLLSYVL), 420–440 (LFAVTAFCVELCLKVIVSLTV), and 470–490 (IIEFIFGVVMFGNGAYTMMFE). The RING-type; atypical zinc finger occupies 547–586 (CAICYHEFTTSARITPCNHYFHALCLRKWLYIQDTCPMCH). The segment at 602 to 668 (SNNNGFIAPN…AAAEFNDDTD (67 aa)) is disordered. The span at 618 to 630 (EALREDAAGSDRE) shows a compositional bias: basic and acidic residues. Acidic residues predominate over residues 631-641 (LNEDDSTDCDD). A Phosphoserine modification is found at Ser636. Thr637 and Thr667 each carry phosphothreonine.

As to quaternary structure, interacts with VHL. Interacts with MHC class I and HM13. Component of SCAP-SREBP complex composed of SREBF2, SCAP and RNF139; the complex hampers the interaction between SCAP and SEC24B, thereby reducing SREBF2 proteolytic processing. Interacts with SREBF2 (via C-terminal domain). Interacts with SCAP; the interaction inhibits the interaction of SCAP with SEC24B and hampering the ER to Golgi transport of the SCAP-SREBP complex. Interacts with SEC24B. Interacts with INSIG1 and INSIG2. Interacts with EIF3F and EIF3H; the interaction leads to protein translation inhibitions in a ubiquitination-dependent manner. Interacts with XBP1 isoform 1; the interaction induces ubiquitination and degradation of XBP1 isoform 1. Interacts with AUP1, AMFR and UBE2G2; interaction with AUP1 facilitates interaction of RNF139 with ubiquitin-conjugating enzyme UBE2G2 and ubiquitin ligase AMFR/gp78, leading to sterol-induced ubiquitination of HMGCR and its subsequent proteasomal degradation. In terms of processing, autoubiquitinated. Ubiquitination is induced by sterol and leads to ist degradation via the ubiquitin-proteasome pathway.

It localises to the endoplasmic reticulum membrane. The catalysed reaction is S-ubiquitinyl-[E2 ubiquitin-conjugating enzyme]-L-cysteine + [acceptor protein]-L-lysine = [E2 ubiquitin-conjugating enzyme]-L-cysteine + N(6)-ubiquitinyl-[acceptor protein]-L-lysine.. The protein operates within protein modification; protein ubiquitination. In terms of biological role, E3-ubiquitin ligase; acts as a negative regulator of cell proliferation through mechanisms involving G2/M arrest and cell death. Required for MHC class I ubiquitination in cells expressing the cytomegalovirus protein US2 before dislocation from the endoplasmic reticulum (ER). Affects SREBP processing by hindering the SREBP-SCAP complex translocation from the ER to the Golgi, thereby reducing SREBF2 target gene expression. Involved in the sterol-accelerated degradation of HMGCR. This is achieved through binding to INSIG1 and/or INSIG2 at the ER membrane. In addition, interaction of RNF139 with AUP1 facilitates interaction of RNF139 with ubiquitin-conjugating enzyme UBE2G2 and ubiquitin ligase AMFR, leading to ubiquitination of HMGCR. The ubiquitinated HMGCR is then released from the ER by the complex into the cytosol for subsequent destruction. Required for INSIG1 ubiquitination. May be required for EIF3 complex ubiquitination. This chain is E3 ubiquitin-protein ligase RNF139, found in Mus musculus (Mouse).